Consider the following 78-residue polypeptide: MAKVCQVTGKRPVTGHNVSHAKNHTKRRFLPNLHSHRFWVESEKRFVKLRISTKGMRIIDKKGIDTVLAELRARGEKV.

A disordered region spans residues 1–22 (MAKVCQVTGKRPVTGHNVSHAK).

It belongs to the bacterial ribosomal protein bL28 family.

In Saccharophagus degradans (strain 2-40 / ATCC 43961 / DSM 17024), this protein is Large ribosomal subunit protein bL28.